We begin with the raw amino-acid sequence, 604 residues long: ATP-dependent RNA helicase DBP1 (604 aa).

The segment at 1-79 is disordered; sequence MSDGSGRYVP…RASGSGGFGG (79 aa). The segment covering 32 to 45 has biased composition (polar residues); the sequence is SRYSGNGFFSSPNR. A Q motif motif is present at residues 138-166; the sequence is TEFKSPPLDELLLENVELANFSKPTPVQK. The Helicase ATP-binding domain maps to 169–358; the sequence is IPIVTKNRDL…RDFLKDYIFL (190 aa). ATP is bound at residue 182 to 189; the sequence is AQTGSGKT. The DEAD box motif lies at 302–305; sequence DEAD. The Helicase C-terminal domain occupies 386-529; it reads LLDILINEID…EVPQFLVNMV (144 aa). Residues 535–591 form a disordered region; that stretch reads FGRGGRNSRTGSNRGRGSNTRDYRHSNKDDWGSLGSSRRGFRSNDNRGFGNNWGSSS. Positions 541 to 552 are enriched in low complexity; the sequence is NSRTGSNRGRGS. A compositionally biased stretch (basic and acidic residues) spans 553 to 565; sequence NTRDYRHSNKDDW.

The protein belongs to the DEAD box helicase family. DDX3/DED1 subfamily.

Its subcellular location is the cytoplasm. It carries out the reaction ATP + H2O = ADP + phosphate + H(+). Its function is as follows. ATP-binding RNA helicase involved in translation initiation. Remodels RNA in response to ADP and ATP concentrations by facilitating disruption, but also formation of RNA duplexes. Redundant to DED1, may be required in conditions in which DED1 expression is decreased. In Candida glabrata (strain ATCC 2001 / BCRC 20586 / JCM 3761 / NBRC 0622 / NRRL Y-65 / CBS 138) (Yeast), this protein is ATP-dependent RNA helicase DBP1 (DBP1).